A 1225-amino-acid polypeptide reads, in one-letter code: DNA-directed RNA polymerase subunit beta' (1225 aa).

C60, C62, C75, and C78 together coordinate Zn(2+). 3 residues coordinate Mg(2+): D450, D452, and D454. C818, C892, C899, and C902 together coordinate Zn(2+).

Belongs to the RNA polymerase beta' chain family. As to quaternary structure, the RNAP catalytic core consists of 2 alpha, 1 beta, 1 beta' and 1 omega subunit. When a sigma factor is associated with the core the holoenzyme is formed, which can initiate transcription. The cofactor is Mg(2+). It depends on Zn(2+) as a cofactor.

The enzyme catalyses RNA(n) + a ribonucleoside 5'-triphosphate = RNA(n+1) + diphosphate. DNA-dependent RNA polymerase catalyzes the transcription of DNA into RNA using the four ribonucleoside triphosphates as substrates. This Streptococcus pneumoniae (strain P1031) protein is DNA-directed RNA polymerase subunit beta'.